Consider the following 267-residue polypeptide: NAD kinase 2 (267 aa).

Asp-52 serves as the catalytic Proton acceptor. Residues 52 to 53, 124 to 125, Arg-151, Asp-153, 164 to 169, and Ala-188 contribute to the NAD(+) site; these read DA, NE, and TAYNKS.

It belongs to the NAD kinase family. It depends on a divalent metal cation as a cofactor.

Its subcellular location is the cytoplasm. The enzyme catalyses NAD(+) + ATP = ADP + NADP(+) + H(+). Involved in the regulation of the intracellular balance of NAD and NADP, and is a key enzyme in the biosynthesis of NADP. Catalyzes specifically the phosphorylation on 2'-hydroxyl of the adenosine moiety of NAD to yield NADP. This is NAD kinase 2 from Bacillus anthracis.